A 122-amino-acid polypeptide reads, in one-letter code: Ribosomal protein eL22-like (122 aa).

Residues serine 112, serine 118, and serine 120 each carry the phosphoserine modification.

It belongs to the eukaryotic ribosomal protein eL22 family.

This chain is Ribosomal protein eL22-like (RPL22L1), found in Homo sapiens (Human).